A 60-amino-acid chain; its full sequence is Large ribosomal subunit protein bL32 (60 aa).

It belongs to the bacterial ribosomal protein bL32 family.

This chain is Large ribosomal subunit protein bL32, found in Paramagnetospirillum magneticum (strain ATCC 700264 / AMB-1) (Magnetospirillum magneticum).